Consider the following 673-residue polypeptide: Glycine--tRNA ligase beta subunit (673 aa).

The protein belongs to the class-II aminoacyl-tRNA synthetase family. As to quaternary structure, tetramer of two alpha and two beta subunits.

It localises to the cytoplasm. It carries out the reaction tRNA(Gly) + glycine + ATP = glycyl-tRNA(Gly) + AMP + diphosphate. The protein is Glycine--tRNA ligase beta subunit of Lactococcus lactis subsp. cremoris (strain SK11).